We begin with the raw amino-acid sequence, 392 residues long: DNA-directed RNA polymerase subunit Rpo1C (392 aa).

Belongs to the RNA polymerase beta' chain family. In terms of assembly, part of the RNA polymerase complex.

It localises to the cytoplasm. The enzyme catalyses RNA(n) + a ribonucleoside 5'-triphosphate = RNA(n+1) + diphosphate. DNA-dependent RNA polymerase (RNAP) catalyzes the transcription of DNA into RNA using the four ribonucleoside triphosphates as substrates. Forms part of the jaw domain. This chain is DNA-directed RNA polymerase subunit Rpo1C, found in Sulfurisphaera tokodaii (strain DSM 16993 / JCM 10545 / NBRC 100140 / 7) (Sulfolobus tokodaii).